The chain runs to 417 residues: Diphosphomevalonate decarboxylase 1 (417 aa).

(R)-5-diphosphomevalonate is bound at residue 22–25; that stretch reads YWGK. The Peroxisomal targeting signal PTS2 motif lies at 39 to 47; sequence RVSLDPDHL. (R)-5-diphosphomevalonate-binding positions include R77, 160-165, and T216; that span reads SGSACR.

This sequence belongs to the diphosphomevalonate decarboxylase family. Homodimer.

The protein resides in the peroxisome. It carries out the reaction (R)-5-diphosphomevalonate + ATP = isopentenyl diphosphate + ADP + phosphate + CO2. The protein operates within isoprenoid biosynthesis; isopentenyl diphosphate biosynthesis via mevalonate pathway; isopentenyl diphosphate from (R)-mevalonate: step 3/3. Performs the first committed step in the biosynthesis of isoprene-containing compounds such as sterols and terpenoids. Component of the triterpene saponins (e.g. ginsenosides or panaxosides) and phytosterols biosynthetic pathways. Catalyzes the conversion of mevalonate diphosphate to isopentenyl diphosphate (IPP). In Panax ginseng (Korean ginseng), this protein is Diphosphomevalonate decarboxylase 1.